We begin with the raw amino-acid sequence, 121 residues long: Large ribosomal subunit protein uL14c (121 aa).

This sequence belongs to the universal ribosomal protein uL14 family. As to quaternary structure, part of the 50S ribosomal subunit.

Its subcellular location is the plastid. It localises to the chloroplast. Functionally, binds to 23S rRNA. In Nephroselmis olivacea (Green alga), this protein is Large ribosomal subunit protein uL14c.